Here is a 206-residue protein sequence, read N- to C-terminus: Large ribosomal subunit protein uL4 (206 aa).

A disordered region spans residues 43–78 (ARSGNRKQKDREEVKHTTKKPWRQKGTGRARAGMSS). Positions 49–58 (KQKDREEVKH) are enriched in basic and acidic residues. The segment covering 59–70 (TTKKPWRQKGTG) has biased composition (basic residues).

Belongs to the universal ribosomal protein uL4 family. In terms of assembly, part of the 50S ribosomal subunit.

In terms of biological role, one of the primary rRNA binding proteins, this protein initially binds near the 5'-end of the 23S rRNA. It is important during the early stages of 50S assembly. It makes multiple contacts with different domains of the 23S rRNA in the assembled 50S subunit and ribosome. Forms part of the polypeptide exit tunnel. This chain is Large ribosomal subunit protein uL4, found in Ralstonia nicotianae (strain ATCC BAA-1114 / GMI1000) (Ralstonia solanacearum).